Consider the following 148-residue polypeptide: Large ribosomal subunit protein bL9 (148 aa).

It belongs to the bacterial ribosomal protein bL9 family.

Its function is as follows. Binds to the 23S rRNA. In Parabacteroides distasonis (strain ATCC 8503 / DSM 20701 / CIP 104284 / JCM 5825 / NCTC 11152), this protein is Large ribosomal subunit protein bL9.